Reading from the N-terminus, the 240-residue chain is L-isoleucine-4-hydroxylase (240 aa).

Fe cation-binding residues include His159, Asp161, and His212.

Belongs to the iron/ascorbate-dependent oxidoreductase family. It depends on L-ascorbate as a cofactor. The cofactor is Fe(2+).

It catalyses the reaction L-isoleucine + 2-oxoglutarate + O2 = (4S)-4-hydroxy-L-isoleucine + succinate + CO2. Functionally, catalyzes the hydroxylation of L-isoleucine to produce (4S)-4-hydroxy-L-isoleucine. Can also catalyze the hydroxylation of L-leucine, L-norvaline, L-norleucine and L-allo-isoleucine, as well as the sulfoxidation of L-methionine, L-ethionine, S-methyl-L-cysteine, S-ethyl-L-cysteine, and S-allyl-L-cysteine. This is L-isoleucine-4-hydroxylase from Bacillus thuringiensis.